The primary structure comprises 286 residues: NAD(P)H azoreductase (286 aa).

NADP(+) is bound by residues 6-11 (GGTGTI), Arg-31, and 136-141 (GFFMQN).

This sequence belongs to the NmrA-type oxidoreductase family. Azoreductase type 3 subfamily. In terms of assembly, monomer.

Its function is as follows. Catalyzes the reductive cleavage of azo bond in aromatic azo compounds to the corresponding amines. Uses preferentially NADPH rather than NADH as an electron donor for its activity. The enzyme reductively cleaved Orange II and carboxy-Orange II, and can also reduce several sulfonated structural analogs, which carry a hydroxy group in the 2 position of the naphthol ring. The chain is NAD(P)H azoreductase (azoB) from Xenophilus azovorans.